Here is a 147-residue protein sequence, read N- to C-terminus: Ribonuclease H (147 aa).

Residues 3-145 form the RNase H type-1 domain; it reads TEDRVEIYTD…ADQLANKGVE (143 aa). 4 residues coordinate Mg(2+): Asp-12, Glu-50, Asp-72, and Asp-137.

The protein belongs to the RNase H family. As to quaternary structure, monomer. Mg(2+) serves as cofactor.

Its subcellular location is the cytoplasm. The catalysed reaction is Endonucleolytic cleavage to 5'-phosphomonoester.. In terms of biological role, endonuclease that specifically degrades the RNA of RNA-DNA hybrids. In Chromobacterium violaceum (strain ATCC 12472 / DSM 30191 / JCM 1249 / CCUG 213 / NBRC 12614 / NCIMB 9131 / NCTC 9757 / MK), this protein is Ribonuclease H.